A 277-amino-acid chain; its full sequence is R-spondin-3 (277 aa).

The first 21 residues, 1-21, serve as a signal peptide directing secretion; that stretch reads MHLRLISCFFIILNFMEYIGS. FU repeat units follow at residues 35 to 86 and 92 to 135; these read PNVS…GYYG and INKC…GLEA. N-linked (GlcNAc...) asparagine glycosylation occurs at Asn36. 11 disulfides stabilise this stretch: Cys41–Cys48, Cys45–Cys54, Cys57–Cys76, Cys80–Cys95, Cys98–Cys105, Cys102–Cys111, Cys114–Cys125, Cys129–Cys142, Cys148–Cys190, Cys159–Cys166, and Cys199–Cys206. The 61-residue stretch at 147–207 folds into the TSP type-1 domain; it reads HCEASEWSPW…TCIVQRKKCS (61 aa). A disordered region spans residues 210-277; sequence ERGKKGRERK…QKSVSVSTVH (68 aa). The segment covering 213-223 has biased composition (basic residues); it reads KKGRERKRKKL. Low complexity predominate over residues 232–245; sequence SSSSDSKGLESSIE.

Belongs to the R-spondin family. As to quaternary structure, interacts with the extracellular domain of FZD8 and LRP6. It however does not form a ternary complex with FZD8 and LRP6. Interacts with WNT1. Binds heparin. Interacts with LGR4, LGR5 and LGR6. As to expression, highly expressed in endothelial cells.

Its subcellular location is the secreted. Its function is as follows. Activator of the canonical Wnt signaling pathway by acting as a ligand for LGR4-6 receptors, which acts as a key regulator of angiogenesis. Upon binding to LGR4-6 (LGR4, LGR5 or LGR6), LGR4-6 associate with phosphorylated LRP6 and frizzled receptors that are activated by extracellular Wnt receptors, triggering the canonical Wnt signaling pathway to increase expression of target genes. Also regulates the canonical Wnt/beta-catenin-dependent pathway and non-canonical Wnt signaling by acting as an inhibitor of ZNRF3, an important regulator of the Wnt signaling pathway. Acts as a ligand for frizzled FZD8 and LRP6. May negatively regulate the TGF-beta pathway. Acts as a key regulator of angiogenesis by controlling vascular stability and pruning: acts by activating the non-canonical Wnt signaling pathway in endothelial cells. Can also amplify Wnt signaling pathway independently of LGR4-6 receptors, possibly by acting as a direct antagonistic ligand to RNF43 and ZNRF3. This Mus musculus (Mouse) protein is R-spondin-3 (Rspo3).